Consider the following 233-residue polypeptide: uncharacterized protein (233 aa).

This is an uncharacterized protein from Methanocaldococcus jannaschii (strain ATCC 43067 / DSM 2661 / JAL-1 / JCM 10045 / NBRC 100440) (Methanococcus jannaschii).